Consider the following 62-residue polypeptide: Alpha-conotoxin-like Qc1.2 (62 aa).

The signal sequence occupies residues 1 to 21; that stretch reads MGMRMMFTVFLLVALATTVAS. Positions 22–48 are excised as a propeptide; it reads FTLDRASNGRNAAADDKPSDWIALAIK. At Gln49 the chain carries Pyrrolidone carboxylic acid. Cystine bridges form between Cys50/Cys56 and Cys51/Cys61.

Belongs to the conotoxin A superfamily. As to expression, expressed by the venom duct.

The protein resides in the secreted. Its function is as follows. Alpha-conotoxins bind to the nicotinic acetylcholine receptors (nAChR) and inhibit them. This synthetic peptide (10 uM) selectively, but weakly inhibits both rat neuronal alpha-3-beta-2/CHRNA3-CHRNB2 (63%) and alpha-3-beta-4/CHRNA3-CHRNB4 (37%) subtypes of nAChR. The protein is Alpha-conotoxin-like Qc1.2 of Conus quercinus (Oak cone).